The sequence spans 451 residues: Speckle-type POZ protein homolog (451 aa).

Positions 51 to 75 (EVVSSGSGNSAHGRSISPSPSSASH) are disordered. Over residues 60 to 75 (SAHGRSISPSPSSASH) the composition is skewed to low complexity. The region spanning 95–225 (KFNYMWTINN…GDRLSIFCEV (131 aa)) is the MATH domain. The BTB domain maps to 265-338 (SDFTLVCKSD…MYTGQTKYIE (74 aa)).

Belongs to the Tdpoz family.

It localises to the nucleus. The protein localises to the nucleus speckle. The protein operates within protein modification; protein ubiquitination. Its function is as follows. Mediates ubiquitination and proteasomal degradation of target proteins, most likely in complex with cul-3. May promote the degradation of bromodomain-containing proteins such as bet-1. In Caenorhabditis elegans, this protein is Speckle-type POZ protein homolog.